Here is a 248-residue protein sequence, read N- to C-terminus: 3-deoxy-manno-octulosonate cytidylyltransferase (248 aa).

Belongs to the KdsB family.

It is found in the cytoplasm. It catalyses the reaction 3-deoxy-alpha-D-manno-oct-2-ulosonate + CTP = CMP-3-deoxy-beta-D-manno-octulosonate + diphosphate. The protein operates within nucleotide-sugar biosynthesis; CMP-3-deoxy-D-manno-octulosonate biosynthesis; CMP-3-deoxy-D-manno-octulosonate from 3-deoxy-D-manno-octulosonate and CTP: step 1/1. It functions in the pathway bacterial outer membrane biogenesis; lipopolysaccharide biosynthesis. In terms of biological role, activates KDO (a required 8-carbon sugar) for incorporation into bacterial lipopolysaccharide in Gram-negative bacteria. This is 3-deoxy-manno-octulosonate cytidylyltransferase from Photobacterium profundum (strain SS9).